We begin with the raw amino-acid sequence, 652 residues long: Putative glycine--tRNA ligase (652 aa).

Residues 119–145 (GDKEARGQNSNDQPEESDDKKKRKKKV) form a disordered region. E221 serves as a coordination point for glycine. ATP is bound by residues 253 to 255 (RNE) and 264 to 265 (RV). Glycine is bound at residue E272. 380–381 (EC) lines the ATP pocket. 499 to 501 (EPS) serves as a coordination point for glycine. R506 serves as a coordination point for ATP.

It belongs to the class-II aminoacyl-tRNA synthetase family. As to quaternary structure, homodimer.

The protein localises to the cytoplasm. It carries out the reaction tRNA(Gly) + glycine + ATP = glycyl-tRNA(Gly) + AMP + diphosphate. The enzyme catalyses 2 ATP + H(+) = P(1),P(4)-bis(5'-adenosyl) tetraphosphate + diphosphate. In terms of biological role, catalyzes the ATP-dependent ligation of glycine to the 3'-end of its cognate tRNA, via the formation of an aminoacyl-adenylate intermediate (Gly-AMP). Also produces diadenosine tetraphosphate (Ap4A), a universal pleiotropic signaling molecule needed for cell regulation pathways, by direct condensation of 2 ATPs. Thereby, may play a special role in Ap4A homeostasis. This Schizosaccharomyces pombe (strain 972 / ATCC 24843) (Fission yeast) protein is Putative glycine--tRNA ligase (grs1).